The sequence spans 388 residues: Processive diacylglycerol beta-glucosyltransferase (388 aa).

This sequence belongs to the glycosyltransferase 28 family. UgtP subfamily.

It localises to the cell membrane. The catalysed reaction is a 1,2-diacyl-3-O-(beta-D-glucopyranosyl)-sn-glycerol + UDP-alpha-D-glucose = a 1,2-diacyl-3-O-(beta-D-Glc-(1-&gt;6)-beta-D-Glc)-sn-glycerol + UDP + H(+). The enzyme catalyses a 1,2-diacyl-3-O-(beta-D-Glc-(1-&gt;6)-beta-D-Glc)-sn-glycerol + UDP-alpha-D-glucose = a 1,2-diacyl-3-O-(beta-D-Glc-(1-&gt;6)-beta-D-Glc-(1-&gt;6)-beta-D-Glc)-sn-glycerol + UDP + H(+). It carries out the reaction a 1,2-diacyl-sn-glycerol + UDP-alpha-D-glucose = a 1,2-diacyl-3-O-(beta-D-glucopyranosyl)-sn-glycerol + UDP + H(+). It participates in glycolipid metabolism; diglucosyl-diacylglycerol biosynthesis. Its function is as follows. Processive glucosyltransferase involved in the biosynthesis of both the bilayer- and non-bilayer-forming membrane glucolipids. Is able to successively transfer up to three glucosyl residues to diacylglycerol (DAG), thereby catalyzing the formation of beta-monoglucosyl-DAG (3-O-(beta-D-glucopyranosyl)-1,2-diacyl-sn-glycerol), beta-diglucosyl-DAG (3-O-(beta-D-glucopyranosyl-beta-(1-&gt;6)-D-glucopyranosyl)-1,2-diacyl-sn-glycerol) and beta-triglucosyl-DAG (3-O-(beta-D-glucopyranosyl-beta-(1-&gt;6)-D-glucopyranosyl-beta-(1-&gt;6)-D-glucopyranosyl)-1,2-diacyl-sn-glycerol). Beta-diglucosyl-DAG is the predominant glycolipid found in Bacillales and is also used as a membrane anchor for lipoteichoic acid (LTA). This is Processive diacylglycerol beta-glucosyltransferase from Bacillus cereus (strain B4264).